An 89-amino-acid polypeptide reads, in one-letter code: Signal recognition particle 19 kDa protein (89 aa).

This sequence belongs to the SRP19 family. As to quaternary structure, part of the signal recognition particle protein translocation system, which is composed of SRP and FtsY. Archaeal SRP consists of a 7S RNA molecule of 300 nucleotides and two protein subunits: SRP54 and SRP19.

Its subcellular location is the cytoplasm. Functionally, involved in targeting and insertion of nascent membrane proteins into the cytoplasmic membrane. Binds directly to 7S RNA and mediates binding of the 54 kDa subunit of the SRP. This chain is Signal recognition particle 19 kDa protein, found in Methanococcus maripaludis (strain DSM 14266 / JCM 13030 / NBRC 101832 / S2 / LL).